The sequence spans 263 residues: Endonuclease 8 (263 aa).

Proline 2 (schiff-base intermediate with DNA) is an active-site residue. The Proton donor role is filled by glutamate 3. The active-site Proton donor; for beta-elimination activity is lysine 53. Residues glutamine 70, arginine 125, and asparagine 169 each coordinate DNA. An FPG-type zinc finger spans residues 229–263 (KVFHRDGEPCERCGSIIEKTTLSSRPFYWCPGCQH). The active-site Proton donor; for delta-elimination activity is the arginine 253.

Belongs to the FPG family. The cofactor is Zn(2+).

The catalysed reaction is 2'-deoxyribonucleotide-(2'-deoxyribose 5'-phosphate)-2'-deoxyribonucleotide-DNA = a 3'-end 2'-deoxyribonucleotide-(2,3-dehydro-2,3-deoxyribose 5'-phosphate)-DNA + a 5'-end 5'-phospho-2'-deoxyribonucleoside-DNA + H(+). Involved in base excision repair of DNA damaged by oxidation or by mutagenic agents. Acts as a DNA glycosylase that recognizes and removes damaged bases. Has a preference for oxidized pyrimidines, such as thymine glycol, 5,6-dihydrouracil and 5,6-dihydrothymine. Has AP (apurinic/apyrimidinic) lyase activity and introduces nicks in the DNA strand. Cleaves the DNA backbone by beta-delta elimination to generate a single-strand break at the site of the removed base with both 3'- and 5'-phosphates. The protein is Endonuclease 8 of Escherichia coli O17:K52:H18 (strain UMN026 / ExPEC).